Reading from the N-terminus, the 331-residue chain is Tyrosine recombinase XerD (331 aa).

One can recognise a Core-binding (CB) domain in the interval 8–93 (GRDGARLESF…SMRQFYRFLY (86 aa)). In terms of domain architecture, Tyr recombinase spans 114-318 (ALPKTMSVAD…LEERLQELVQ (205 aa)). Catalysis depends on residues Arg161 and Lys185. Residues 214–228 (QEKSKAAASQKKTDT) are compositionally biased toward basic and acidic residues. The disordered stretch occupies residues 214–239 (QEKSKAAASQKKTDTAESPWLFPSNS). Active-site residues include His270, Arg273, and His296. Tyr305 acts as the O-(3'-phospho-DNA)-tyrosine intermediate in catalysis.

This sequence belongs to the 'phage' integrase family. XerD subfamily. In terms of assembly, forms a cyclic heterotetrameric complex composed of two molecules of XerC and two molecules of XerD.

It localises to the cytoplasm. Site-specific tyrosine recombinase, which acts by catalyzing the cutting and rejoining of the recombining DNA molecules. The XerC-XerD complex is essential to convert dimers of the bacterial chromosome into monomers to permit their segregation at cell division. It also contributes to the segregational stability of plasmids. This Agrobacterium fabrum (strain C58 / ATCC 33970) (Agrobacterium tumefaciens (strain C58)) protein is Tyrosine recombinase XerD.